The primary structure comprises 130 residues: Small ribosomal subunit protein uS9 (130 aa).

The protein belongs to the universal ribosomal protein uS9 family.

The protein is Small ribosomal subunit protein uS9 of Burkholderia mallei (strain NCTC 10247).